Here is a 411-residue protein sequence, read N- to C-terminus: Prophage integrase IntR (411 aa).

A Core-binding (CB) domain is found at 81–176; sequence KTFGELCDIW…LLCSLLRFAY (96 aa). The Tyr recombinase domain occupies 197 to 404; that stretch reads IKPDPLSKTE…IDDMNDEQIA (208 aa). Residues Arg231, Lys266, Arg358, and His381 contribute to the active site. Catalysis depends on Tyr391, which acts as the O-(3'-phospho-DNA)-tyrosine intermediate.

The protein belongs to the 'phage' integrase family.

Integrase is necessary for integration of the phage into the host genome by site-specific recombination. In conjunction with excisionase, integrase is also necessary for excision of the prophage from the host genome. The sequence is that of Prophage integrase IntR (intR) from Escherichia coli (strain K12).